Here is a 622-residue protein sequence, read N- to C-terminus: DNA mismatch repair protein MutL (622 aa).

The protein belongs to the DNA mismatch repair MutL/HexB family.

This protein is involved in the repair of mismatches in DNA. It is required for dam-dependent methyl-directed DNA mismatch repair. May act as a 'molecular matchmaker', a protein that promotes the formation of a stable complex between two or more DNA-binding proteins in an ATP-dependent manner without itself being part of a final effector complex. The chain is DNA mismatch repair protein MutL from Clostridium acetobutylicum (strain ATCC 824 / DSM 792 / JCM 1419 / IAM 19013 / LMG 5710 / NBRC 13948 / NRRL B-527 / VKM B-1787 / 2291 / W).